Consider the following 257-residue polypeptide: MNRIETAFKNTKPFIGYLTGGDGGFDYSVACAHALLRGGVDILEIGFPFSDPVADGPIIQKAHTRALKEKTDSTTILEIAKALRQTSDIPLVLFSYYNPLLQKGPQYLHQLKAAGFDAVLTVDLPIPRNANESESFFQALMEAKLFPILLVTPSTQEERLLQISKLAKGFLYYVSHKGTTGIRSKLSDDFSTQIARLRRYFQIPIVAGFGIANRASAIAALEHADGFVVGSAFVEKLEKKISPEELTTFAQSIDPRQ.

Catalysis depends on proton acceptor residues glutamate 44 and aspartate 55.

The protein belongs to the TrpA family. As to quaternary structure, tetramer of two alpha and two beta chains.

The enzyme catalyses (1S,2R)-1-C-(indol-3-yl)glycerol 3-phosphate + L-serine = D-glyceraldehyde 3-phosphate + L-tryptophan + H2O. Its pathway is amino-acid biosynthesis; L-tryptophan biosynthesis; L-tryptophan from chorismate: step 5/5. Functionally, the alpha subunit is responsible for the aldol cleavage of indoleglycerol phosphate to indole and glyceraldehyde 3-phosphate. The polypeptide is Tryptophan synthase alpha chain (Chlamydia felis (strain Fe/C-56) (Chlamydophila felis)).